The sequence spans 336 residues: MAPKVGINGFGRIGRIVFRNAINHGEVDVVAVNDPFIETHYAAYMLKYDSTHGQFKGTIETYEEGLIVNGKKIRFFAERDPAAIPWGTTGADYIVESTGVFTTQEKAAAHLKGGAKKVVISAPSADAPMFVMGVNNTSYTKDINVLSNASCTTNCLAPLAKVINDKFGIVEGLMTTVHSYTATQKVVDAPSSKDWRGGRTAAQNIIPSSTGAAKAVGKVIPTLNGKLTGMAMRVPTSNVSVVDLTCRLEKATSYDEIKKALKDASENELKGILGYTEDDIVSSDLNGDDHSSIFDAKAGIALNSNFVKLVSWYDNEWGYSRRVVDLIAYISKVDAQ.

NAD(+) contacts are provided by residues 12–13, aspartate 34, and arginine 79; that span reads RI. D-glyceraldehyde 3-phosphate contacts are provided by residues 150 to 152, threonine 181, 210 to 211, and arginine 233; these read SCT and TG. Cysteine 151 serves as the catalytic Nucleophile. Asparagine 315 contacts NAD(+).

The protein belongs to the glyceraldehyde-3-phosphate dehydrogenase family. As to quaternary structure, homotetramer.

The protein resides in the cytoplasm. It carries out the reaction D-glyceraldehyde 3-phosphate + phosphate + NAD(+) = (2R)-3-phospho-glyceroyl phosphate + NADH + H(+). It functions in the pathway carbohydrate degradation; glycolysis; pyruvate from D-glyceraldehyde 3-phosphate: step 1/5. The protein is Glyceraldehyde-3-phosphate dehydrogenase (gpdA) of Aspergillus niger.